The chain runs to 282 residues: uncharacterized protein (282 aa).

4 helical membrane passes run tryptophan 130–leucine 150, serine 170–alanine 190, alanine 191–valine 211, and isoleucine 223–alanine 243. The disordered stretch occupies residues aspartate 263–alanine 282.

It is found in the cell membrane. This is an uncharacterized protein from Mycobacterium tuberculosis (strain CDC 1551 / Oshkosh).